The sequence spans 286 residues: Small ribosomal subunit protein uS15m (286 aa).

A mitochondrion-targeting transit peptide spans 1 to 33; sequence MSIVGRNAILNLRISLCPLFMGKRSFVSSPVSN.

This sequence belongs to the universal ribosomal protein uS15 family. In terms of assembly, component of the mitochondrial small ribosomal subunit (mt-SSU). Mature yeast 74S mitochondrial ribosomes consist of a small (37S) and a large (54S) subunit. The 37S small subunit contains a 15S ribosomal RNA (15S mt-rRNA) and 34 different proteins. The 54S large subunit contains a 21S rRNA (21S mt-rRNA) and 46 different proteins. Post-translationally, the precursor is processed in two steps involving mitochondrial intermediate peptidase (MIP) and mitochondrial processing peptidase (MPP).

The protein localises to the mitochondrion. In terms of biological role, component of the mitochondrial ribosome (mitoribosome), a dedicated translation machinery responsible for the synthesis of mitochondrial genome-encoded proteins, including at least some of the essential transmembrane subunits of the mitochondrial respiratory chain. The mitoribosomes are attached to the mitochondrial inner membrane and translation products are cotranslationally integrated into the membrane. The chain is Small ribosomal subunit protein uS15m (MRPS28) from Saccharomyces cerevisiae (strain ATCC 204508 / S288c) (Baker's yeast).